Reading from the N-terminus, the 894-residue chain is Microsomal triglyceride transfer protein large subunit (894 aa).

A signal peptide spans Met-1 to Ser-18. One can recognise a Vitellogenin domain in the interval Leu-28–Ile-662. Cys-174 and Cys-194 are disulfide-bonded.

In terms of assembly, heterodimer; heterodimerizes with the protein disulfide isomerase (P4HB/PDI). Interacts with APOB. Interacts with PRAP1.

The protein localises to the endoplasmic reticulum. It is found in the golgi apparatus. It catalyses the reaction a 1,2-diacyl-sn-glycero-3-phosphocholine(in) = a 1,2-diacyl-sn-glycero-3-phosphocholine(out). It carries out the reaction a 1,2-diacyl-sn-glycero-3-phosphoethanolamine(in) = a 1,2-diacyl-sn-glycero-3-phosphoethanolamine(out). The catalysed reaction is a cholesterol ester(in) = a cholesterol ester(out). The enzyme catalyses a triacyl-sn-glycerol(in) = a triacyl-sn-glycerol(out). Functionally, catalyzes the transport of triglyceride, cholesteryl ester, and phospholipid between phospholipid surfaces. Required for the assembly and secretion of plasma lipoproteins that contain apolipoprotein B. May be involved in regulating cholesteryl ester biosynthesis in cells that produce lipoproteins. The polypeptide is Microsomal triglyceride transfer protein large subunit (MTTP) (Sus scrofa (Pig)).